The sequence spans 638 residues: 9-cis-epoxycarotenoid dioxygenase NCED1, chloroplastic (638 aa).

The transit peptide at 1 to 80 (MQRICPAHCS…QTEQEDEQLV (80 aa)) directs the protein to the chloroplast. Composition is skewed to low complexity over residues 28–37 (AASAAPQSPS), 44–69 (ASAA…TRTP), and 92–102 (TTNGRAAPSQS). 2 disordered regions span residues 28–80 (AASA…EQLV) and 92–113 (TTNG…PAAA). Fe cation-binding residues include H331, H380, H446, and H624.

The protein belongs to the carotenoid oxygenase family. Requires Fe(2+) as cofactor.

Its subcellular location is the plastid. It is found in the chloroplast. The enzyme catalyses a 9-cis-epoxycarotenoid + O2 = a 12'-apo-carotenal + 2-cis,4-trans-xanthoxin. It carries out the reaction 9-cis-violaxanthin + O2 = (3S,5R,6S)-5,6-epoxy-3-hydroxy-5,6-dihydro-12'-apo-beta-caroten-12'-al + 2-cis,4-trans-xanthoxin. It catalyses the reaction 9'-cis-neoxanthin + O2 = (3S,5R,6R)-3,5-dihydroxy-6,7-didehydro-5,6-dihydro-12'-apo-beta-caroten-12'-al + 2-cis,4-trans-xanthoxin. Functionally, has a 11,12(11',12') 9-cis epoxycarotenoid cleavage activity. Catalyzes the first step of abscisic-acid biosynthesis from carotenoids. This is 9-cis-epoxycarotenoid dioxygenase NCED1, chloroplastic from Oryza sativa subsp. japonica (Rice).